Consider the following 377-residue polypeptide: Chaperone protein DnaJ (377 aa).

A J domain is found at 5-69 (DYYEVLGISK…QKRAQYDQYG (65 aa)). The CR-type zinc-finger motif lies at 134–216 (GKDAEIEIPR…CHGKGRVTKT (83 aa)). Residues cysteine 147, cysteine 150, cysteine 164, cysteine 167, cysteine 190, cysteine 193, cysteine 204, and cysteine 207 each coordinate Zn(2+). 4 CXXCXGXG motif repeats span residues 147–154 (CDTCHGSG), 164–171 (CSHCGGKG), 190–197 (CQYCNGTG), and 204–211 (CPTCHGKG).

This sequence belongs to the DnaJ family. Homodimer. Zn(2+) is required as a cofactor.

Its subcellular location is the cytoplasm. In terms of biological role, participates actively in the response to hyperosmotic and heat shock by preventing the aggregation of stress-denatured proteins and by disaggregating proteins, also in an autonomous, DnaK-independent fashion. Unfolded proteins bind initially to DnaJ; upon interaction with the DnaJ-bound protein, DnaK hydrolyzes its bound ATP, resulting in the formation of a stable complex. GrpE releases ADP from DnaK; ATP binding to DnaK triggers the release of the substrate protein, thus completing the reaction cycle. Several rounds of ATP-dependent interactions between DnaJ, DnaK and GrpE are required for fully efficient folding. Also involved, together with DnaK and GrpE, in the DNA replication of plasmids through activation of initiation proteins. The polypeptide is Chaperone protein DnaJ (Listeria monocytogenes serotype 1/2a (strain 10403S)).